Reading from the N-terminus, the 575-residue chain is Preprotein translocase subunit SCY2, chloroplastic (575 aa).

A chloroplast-targeting transit peptide spans Met1–Cys34. Transmembrane regions (helical) follow at residues Phe157 to Phe177, Leu206 to Leu226, Ile251 to Leu271, Val285 to Thr305, Ile306 to Gly326, Leu346 to Val366, Thr414 to Leu434, Gly447 to Phe467, Phe509 to Leu529, and Ser531 to Ile551.

This sequence belongs to the SecY/SEC61-alpha family. As to quaternary structure, part of a second Sec protein translocation apparatus. Interacts probably with SECA2. In terms of tissue distribution, ubiquitous.

Its subcellular location is the plastid. It is found in the chloroplast membrane. It localises to the amyloplast membrane. The protein localises to the chloroplast thylakoid membrane. In terms of biological role, involved in protein export. Probably interacts with other proteins to allow the postimport or conservative sorting pathway for inner membrane proteins in plastids. Central subunit of the protein translocation channel SecYE. Consists of two halves formed by TMs 1-5 and 6-10. These two domains form a lateral gate at the front which open onto the bilayer between TMs 2 and 7, and are clamped together by SecE at the back. The channel is closed by both a pore ring composed of hydrophobic SecY resides and a short helix (helix 2A) on the extracellular side of the membrane which forms a plug. The chain is Preprotein translocase subunit SCY2, chloroplastic (SCY2) from Arabidopsis thaliana (Mouse-ear cress).